We begin with the raw amino-acid sequence, 151 residues long: 3-dehydroquinate dehydratase (151 aa).

Tyr-26 acts as the Proton acceptor in catalysis. Substrate-binding residues include Asn-75, His-81, and Asp-88. The active-site Proton donor is the His-101. Substrate-binding positions include 102-103 (LS) and Arg-112.

Belongs to the type-II 3-dehydroquinase family. Homododecamer.

The enzyme catalyses 3-dehydroquinate = 3-dehydroshikimate + H2O. It participates in metabolic intermediate biosynthesis; chorismate biosynthesis; chorismate from D-erythrose 4-phosphate and phosphoenolpyruvate: step 3/7. In terms of biological role, catalyzes a trans-dehydration via an enolate intermediate. This chain is 3-dehydroquinate dehydratase, found in Shewanella halifaxensis (strain HAW-EB4).